The chain runs to 517 residues: GMP synthase [glutamine-hydrolyzing] (517 aa).

The Glutamine amidotransferase type-1 domain occupies 11 to 202 (KIIVLDYGSQ…AFGVCGAQDN (192 aa)). Residue C88 is the Nucleophile of the active site. Residues H176 and E178 contribute to the active site. A GMPS ATP-PPase domain is found at 203-392 (WTMNDFIDMQ…LGMPYELVWR (190 aa)). ATP is bound at residue 230 to 236 (SGGVDSS).

In terms of assembly, homodimer.

It carries out the reaction XMP + L-glutamine + ATP + H2O = GMP + L-glutamate + AMP + diphosphate + 2 H(+). It participates in purine metabolism; GMP biosynthesis; GMP from XMP (L-Gln route): step 1/1. Functionally, catalyzes the synthesis of GMP from XMP. In Latilactobacillus sakei subsp. sakei (strain 23K) (Lactobacillus sakei subsp. sakei), this protein is GMP synthase [glutamine-hydrolyzing].